The chain runs to 216 residues: Thymidylate kinase (216 aa).

10 to 17 (GIDGCGKT) is an ATP binding site.

The protein belongs to the thymidylate kinase family.

The catalysed reaction is dTMP + ATP = dTDP + ADP. In terms of biological role, phosphorylation of dTMP to form dTDP in both de novo and salvage pathways of dTTP synthesis. This Prochlorococcus marinus (strain MIT 9313) protein is Thymidylate kinase.